Consider the following 843-residue polypeptide: OTU domain-containing protein 7B (843 aa).

Residues 50 to 88 form a disordered region; sequence GNLPPSFSEGSGGSRTPEKGFSDREPTRPPRPILQRQDD. Residues 65–77 show a composition bias toward basic and acidic residues; the sequence is TPEKGFSDREPTR. Phosphoserine is present on S100. Residues 152–401 form a TRAF-binding region; sequence ERDLIEQSML…AVDPGKGWEW (250 aa). The segment at 167-440 is catalytic; that stretch reads AGRLNWWVSV…VKWIPLSSDA (274 aa). One can recognise an OTU domain in the interval 183-365; that stretch reads LLPLATTGDG…QAHFSALVSM (183 aa). Residues 187-193 are regulatory loop; sequence ATTGDGN. The active site involves D191. C194 serves as the catalytic Nucleophile. The active-site Proton acceptor is the H358. Disordered regions lie at residues 442 to 587 and 652 to 711; these read APLA…GGSK and IMNG…CQEP. Composition is skewed to basic and acidic residues over residues 456–471 and 488–500; these read DEPRSTPESGDSDKES and SKRDREKDKKRAD. Residues S464, S467, and S471 each carry the phosphoserine modification. Residues 483 to 498 carry the Nuclear localization signal motif; that stretch reads RRKEKSKRDREKDKKR. Positions 531–543 are enriched in gly residues; that stretch reads KPGGVGTGLGGSS. Basic and acidic residues predominate over residues 665-675; sequence KKPEPDAREEQ. T729 is modified (phosphothreonine). Residues 732–792 form a disordered region; the sequence is RQCPPGRPYP…PEPDGWAGGL (61 aa). The segment at 796–831 adopts an A20-type zinc-finger fold; sequence PPTQTKCKQPNCSFYGHPETNNFCSCCYREELRRRE. Residues C802, C807, C819, and C822 each contribute to the Zn(2+) site.

It belongs to the peptidase C64 family. In terms of assembly, interacts with ZAP70 in activated T cells, but not in resting T cells. Interacts with TRAF3. Interacts with TRAF6. Interacts with PARK7, leading to inhibit deubiquitinase activity. Interacts with EGFR, ITCH and NEDD4. In terms of processing, phosphorylated by EGFR. In terms of tissue distribution, widely expressed. Abundant in kidney, heart and fetal liver. Expressed differentially among B-cells at distinct developmental stages. Higher expression seen in primary immature B-cells as compared to the mature cells.

The protein localises to the cytoplasm. It localises to the nucleus. It carries out the reaction Thiol-dependent hydrolysis of ester, thioester, amide, peptide and isopeptide bonds formed by the C-terminal Gly of ubiquitin (a 76-residue protein attached to proteins as an intracellular targeting signal).. Its activity is regulated as follows. Deubiquitinase activity is inhibited following interaction with PARK7. Its function is as follows. Negative regulator of the non-canonical NF-kappa-B pathway that acts by mediating deubiquitination of TRAF3, an inhibitor of the NF-kappa-B pathway, thereby acting as a negative regulator of B-cell responses. In response to non-canonical NF-kappa-B stimuli, deubiquitinates 'Lys-48'-linked polyubiquitin chains of TRAF3, preventing TRAF3 proteolysis and over-activation of non-canonical NF-kappa-B. Negatively regulates mucosal immunity against infections. Deubiquitinates ZAP70, and thereby regulates T cell receptor (TCR) signaling that leads to the activation of NF-kappa-B. Plays a role in T cell homeostasis and is required for normal T cell responses, including production of IFNG and IL2. Mediates deubiquitination of EGFR. Has deubiquitinating activity toward 'Lys-11', 'Lys-48' and 'Lys-63'-linked polyubiquitin chains. Has a much higher catalytic rate with 'Lys-11'-linked polyubiquitin chains (in vitro); however the physiological significance of these data are unsure. Hydrolyzes both linear and branched forms of polyubiquitin. Acts as a regulator of mTORC1 and mTORC2 assembly by mediating 'Lys-63'-linked deubiquitination of MLST8, thereby promoting assembly of the mTORC2 complex, while inibiting formation of the mTORC1 complex. In Homo sapiens (Human), this protein is OTU domain-containing protein 7B (OTUD7B).